The following is a 408-amino-acid chain: Argininosuccinate synthase (408 aa).

ATP-binding positions include Ala10–Ser18 and Ala37. Residues Tyr90 and Ser95 each contribute to the L-citrulline site. Residue Gly120 coordinates ATP. Residues Thr122, Asn126, and Asp127 each contribute to the L-aspartate site. Residue Asn126 participates in L-citrulline binding. L-citrulline contacts are provided by Arg130, Ser181, Ser190, Glu266, and Tyr278.

Belongs to the argininosuccinate synthase family. Type 1 subfamily. In terms of assembly, homotetramer.

The protein resides in the cytoplasm. It carries out the reaction L-citrulline + L-aspartate + ATP = 2-(N(omega)-L-arginino)succinate + AMP + diphosphate + H(+). It participates in amino-acid biosynthesis; L-arginine biosynthesis; L-arginine from L-ornithine and carbamoyl phosphate: step 2/3. This chain is Argininosuccinate synthase, found in Cereibacter sphaeroides (strain ATCC 17025 / ATH 2.4.3) (Rhodobacter sphaeroides).